A 607-amino-acid chain; its full sequence is MELVRRLMPLTLLILSCLAELTMAEAEGNASCTVSLGGANMAETHKAMILQLNPSENCTWTIERPENKSIRIIFSYVQLDPDGSCESENIKVFDGTSSNGPLLGQVCSKNDYVPVFESSSSTLTFQIVTDSARIQRTVFVFYYFFSPNISIPNCGGYLDTLEGSFTSPNYPKPHPELAYCVWHIQVEKDYKIKLNFKEIFLEIDKQCKFDFLAIYDGPSTNSGLIGQVCGRVTPTFESSSNSLTVVLSTDYANSYRGFSASYTSIYAENINTTSLTCSSDRMRVIISKSYLEAFNSNGNNLQLKDPTCRPKLSNVVEFSVPLNGCGTIRKVEDQSITYTNIITFSASSTSEVITRQKQLQIIVKCEMGHNSTVEIIYITEDDVIQSQNALGKYNTSMALFESNSFEKTILESPYYVDLNQTLFVQVSLHTSDPNLVVFLDTCRASPTSDFASPTYDLIKSGCSRDETCKVYPLFGHYGRFQFNAFKFLRSMSSVYLQCKVLICDSSDHQSRCNQGCVSRSKRDISSYKWKTDSIIGPIRLKRDRSASGNSGFQHETHAEETPNQPFNSVHLFSFMVLALNVVTVATITVRHFVNQRADYKYQKLQNY.

A signal peptide spans 1–24 (MELVRRLMPLTLLILSCLAELTMA). A disulfide bond links Cys17 and Cys58. CUB domains follow at residues 25–146 (EAEG…YFFS) and 154–265 (CGGY…YTSI). At 25 to 568 (EAEGNASCTV…EETPNQPFNS (544 aa)) the chain is on the lumenal side. Residues Asn29, Asn57, and Asn67 are each glycosylated (N-linked (GlcNAc...) asparagine). 3 cysteine pairs are disulfide-bonded: Cys85-Cys107, Cys154-Cys180, and Cys207-Cys229. A ZP domain is found at 276-519 (TCSSDRMRVI…SRCNQGCVSR (244 aa)). 2 N-linked (GlcNAc...) asparagine glycosylation sites follow: Asn394 and Asn419. Residues Cys442 and Cys498 are joined by a disulfide bond. A helical membrane pass occupies residues 569-589 (VHLFSFMVLALNVVTVATITV). Residues 590 to 607 (RHFVNQRADYKYQKLQNY) are Cytoplasmic-facing.

In terms of tissue distribution, detected in pancreas and epithelium of ovary. Expressed at higher levels in ovarian tumors than in normal tissue.

Its subcellular location is the zymogen granule membrane. Localized to zymogen granules, where it functions in trypsinogen activation. May indirectly regulate cell motility, cell-cell and cell/extracellular matrix interactions. This chain is CUB and zona pellucida-like domain-containing protein 1, found in Homo sapiens (Human).